Reading from the N-terminus, the 407-residue chain is tRNA (uracil(54)-C(5))-methyltransferase (407 aa).

Positions 61, 67, 70, and 137 each coordinate [4Fe-4S] cluster. S-adenosyl-L-methionine-binding positions include glutamine 253, tyrosine 279, threonine 284, 300–301 (DS), aspartate 327, and aspartate 341. Cysteine 368 functions as the Nucleophile in the catalytic mechanism. Glutamate 400 acts as the Proton acceptor in catalysis.

It belongs to the class I-like SAM-binding methyltransferase superfamily. RNA M5U methyltransferase family.

It catalyses the reaction uridine(54) in tRNA + S-adenosyl-L-methionine = 5-methyluridine(54) in tRNA + S-adenosyl-L-homocysteine + H(+). Functionally, catalyzes the formation of 5-methyl-uridine at position 54 (m5U54) in tRNA. This Pyrococcus horikoshii (strain ATCC 700860 / DSM 12428 / JCM 9974 / NBRC 100139 / OT-3) protein is tRNA (uracil(54)-C(5))-methyltransferase.